A 168-amino-acid polypeptide reads, in one-letter code: G/U mismatch-specific DNA glycosylase (168 aa).

Belongs to the uracil-DNA glycosylase (UDG) superfamily. TDG/mug family. In terms of assembly, binds DNA as a monomer.

Its subcellular location is the cytoplasm. The enzyme catalyses Specifically hydrolyzes mismatched double-stranded DNA and polynucleotides, releasing free uracil.. In terms of biological role, excises ethenocytosine and uracil, which can arise by alkylation or deamination of cytosine, respectively, from the corresponding mispairs with guanine in ds-DNA. It is capable of hydrolyzing the carbon-nitrogen bond between the sugar-phosphate backbone of the DNA and the mispaired base. The complementary strand guanine functions in substrate recognition. Required for DNA damage lesion repair in stationary-phase cells. This chain is G/U mismatch-specific DNA glycosylase, found in Klebsiella pneumoniae (strain 342).